Here is a 226-residue protein sequence, read N- to C-terminus: UPF0758 protein gbs1168 (226 aa).

The 123-residue stretch at Gln-103–Ile-225 folds into the MPN domain. Positions 174, 176, and 187 each coordinate Zn(2+). A JAMM motif motif is present at residues His-174–Asp-187.

The protein belongs to the UPF0758 family.

This Streptococcus agalactiae serotype III (strain NEM316) protein is UPF0758 protein gbs1168.